A 465-amino-acid polypeptide reads, in one-letter code: Mothers against decapentaplegic homolog 5 (465 aa).

An N-acetylthreonine modification is found at Thr2. Residues 13–137 form the MH1 domain; the sequence is PAVKRLLGWK…YKRVESPVLP (125 aa). Cys65, Cys110, Cys122, and His127 together coordinate Zn(2+). The tract at residues 163-249 is disordered; that stretch reads NEPHMPQNAT…PMDTSNNMIP (87 aa). Positions 169 to 182 are enriched in polar residues; the sequence is QNATFPDSFHQPNN. Pro residues predominate over residues 186–197; it reads PLSPNSPYPPSP. A compositionally biased stretch (low complexity) spans 198–214; the sequence is ASSTYPNSPASSGPGSP. The segment covering 234–249 has biased composition (polar residues); that stretch reads GQDNSQPMDTSNNMIP. Residues 271 to 465 form the MH2 domain; sequence WCSIVYYELN…SPLNPISSVS (195 aa). 2 positions are modified to phosphoserine: Ser463 and Ser465.

Belongs to the dwarfin/SMAD family. In terms of assembly, homodimer. Forms trimers with the co-SMAD SMAD4. Interacts with PEBP2-alpha subunit and SMURF1. Interacts with SUV39H1 and SUV39H2. Interacts (via MH2 domain) with LEMD3. Interacts with WWP1. Interacts with TMEM119. Interacts with ZNF8. Interacts with RANBP3L. Interacts with HK1. Interacts with HGS; this interaction attenuates BMP signaling. Post-translationally, phosphorylated on serine by BMP (bone morphogenetic proteins) type 1 receptor kinase. In terms of processing, ubiquitin-mediated proteolysis by SMAD-specific E3 ubiquitin ligase SMURF1. As to expression, ubiquitous.

Its subcellular location is the cytoplasm. The protein localises to the nucleus. The protein resides in the mitochondrion. In terms of biological role, transcriptional regulator that plays a role in various cellular processes including embryonic development, cell differentiation, angiogenesis and tissue homeostasis. Upon BMP ligand binding to their receptors at the cell surface, is phosphorylated by activated type I BMP receptors (BMPRIs) and associates with SMAD4 to form a heteromeric complex which translocates into the nucleus acting as transcription factor. In turn, the hetero-trimeric complex recognizes cis-regulatory elements containing Smad Binding Elements (SBEs) to modulate the outcome of the signaling network. Non-phosphorylated SMAD5 has a cytoplasmic role in energy metabolism regulation by promoting mitochondrial respiration and glycolysis in response to cytoplasmic pH changes. Mechanistically, interacts with hexokinase 1/HK1 and thereby accelerates glycolysis. The chain is Mothers against decapentaplegic homolog 5 (SMAD5) from Homo sapiens (Human).